The chain runs to 293 residues: Protease HtpX (293 aa).

2 consecutive transmembrane segments (helical) span residues 4-24 and 34-54; these read IALFLLTNLAVMVVFGLVLSL and GLMIMALLFGFGGSFVSLLMS. Residue His-139 participates in Zn(2+) binding. Glu-140 is an active-site residue. His-143 lines the Zn(2+) pocket. 2 helical membrane-spanning segments follow: residues 158 to 178 and 193 to 213; these read VVNTFVIFISRILAQLAAGFM and LIYFAVATVLELVFGILASII. Glu-222 lines the Zn(2+) pocket.

The protein belongs to the peptidase M48B family. Zn(2+) is required as a cofactor.

It localises to the cell inner membrane. This Escherichia coli (strain ATCC 8739 / DSM 1576 / NBRC 3972 / NCIMB 8545 / WDCM 00012 / Crooks) protein is Protease HtpX.